A 207-amino-acid polypeptide reads, in one-letter code: Dephospho-CoA kinase (207 aa).

Positions 4–204 (VVGLTGGIGS…HLYLQFAEIF (201 aa)) constitute a DPCK domain. 12–17 (GSGKST) serves as a coordination point for ATP.

It belongs to the CoaE family.

The protein localises to the cytoplasm. It catalyses the reaction 3'-dephospho-CoA + ATP = ADP + CoA + H(+). It functions in the pathway cofactor biosynthesis; coenzyme A biosynthesis; CoA from (R)-pantothenate: step 5/5. Functionally, catalyzes the phosphorylation of the 3'-hydroxyl group of dephosphocoenzyme A to form coenzyme A. The polypeptide is Dephospho-CoA kinase (Aggregatibacter actinomycetemcomitans (Actinobacillus actinomycetemcomitans)).